The chain runs to 86 residues: Small ribosomal subunit protein uS17 (86 aa).

It belongs to the universal ribosomal protein uS17 family. In terms of assembly, part of the 30S ribosomal subunit.

Its function is as follows. One of the primary rRNA binding proteins, it binds specifically to the 5'-end of 16S ribosomal RNA. The polypeptide is Small ribosomal subunit protein uS17 (Methylococcus capsulatus (strain ATCC 33009 / NCIMB 11132 / Bath)).